A 475-amino-acid chain; its full sequence is BTB/POZ domain-containing protein 10 (475 aa).

The tract at residues 1 to 143 (MAGRPHPYDG…SSQSSSDGSC (143 aa)) is disordered. Positions 22–31 (LHSRPRKLYK) are enriched in basic residues. A compositionally biased stretch (basic and acidic residues) spans 57–80 (GHERSRDRRRSSDRSRDSSHERTE). Residues 81–94 (SQLTPCIRNVTSPT) are compositionally biased toward polar residues. Basic and acidic residues predominate over residues 97–107 (HHVEREKDHSS). Over residues 108–142 (SRPSSPRPQKASPNGSISSAGNSSRNSSQSSSDGS) the composition is skewed to low complexity. Residues 146-475 (AGEMVFVYEN…LDPDAQNPML (330 aa)) are interaction with AKT family members. Residues 167–241 (ERVTLIVDNT…YKTGIIRCPD (75 aa)) enclose the BTB domain. The disordered stretch occupies residues 455-475 (LPIHPPSGNSDLDPDAQNPML).

Interacts (via C-terminal 330-amino-acid region) with AKT1; AKT2 and AKT3. Interacts with PPP2CA and PPP1CA. In terms of tissue distribution, ubiquitously expressed. Highly expressed in adult brain, testis, aorta and small intestine and weakly expressed in the heart, lung, liver, kidney, pancreas, spleen, thymus, prostate, ovary and colon. Down-regulated in glioma.

Its subcellular location is the nucleus. It is found in the cytoplasm. Functionally, plays a major role as an activator of AKT family members by inhibiting PPP2CA-mediated dephosphorylation, thereby keeping AKTs activated. Plays a role in preventing motor neuronal death and accelerating the growth of pancreatic beta cells. In Homo sapiens (Human), this protein is BTB/POZ domain-containing protein 10 (BTBD10).